The chain runs to 550 residues: Crystal protein (550 aa).

The N-terminal stretch at 1–19 (MNKIIILLIILLSFDIISA) is a signal peptide. Cysteine 91 and cysteine 111 form a disulfide bridge. N-linked (GlcNAc...) asparagine glycosylation is present at asparagine 156. The active-site Acyl-ester intermediate is serine 215. A disulfide bridge connects residues cysteine 267 and cysteine 274. Residues glutamate 340 and histidine 443 each act as charge relay system in the active site. Asparagine 506 carries an N-linked (GlcNAc...) asparagine glycan.

Belongs to the type-B carboxylesterase/lipase family.

It is found in the cytoplasmic vesicle. The protein localises to the esterosome membrane. This Dictyostelium discoideum (Social amoeba) protein is Crystal protein (cryS).